The following is a 544-amino-acid chain: Methyl-accepting chemotaxis protein McpP (544 aa).

The next 3 helical transmembrane spans lie at 12–32 (RLWL…LLML), 50–70 (VVQT…AGTL), and 192–212 (DASL…MLIA). Positions 213–267 (RSIARPLQEAVQAMGNIASGESDLTRRLDTHGSDEITHLGEHFNRFNGKLQGVVG) constitute an HAMP domain. Residues 272 to 508 (AAHALAQSAG…EINRNVLDTA (237 aa)) form the Methyl-accepting transducer domain.

Belongs to the methyl-accepting chemotaxis (MCP) protein family.

It localises to the cell membrane. Its function is as follows. Chemotactic-signal transducers respond to changes in the concentration of attractants and repellents in the environment, transduce a signal from the outside to the inside of the cell, and facilitate sensory adaptation through the variation of the level of methylation. McpP is a chemoreceptor that responds specifically to some C2 and C3 carboxylic acids. Recognizes acetate, pyruvate, propionate, and L-lactate. This Pseudomonas putida (strain ATCC 47054 / DSM 6125 / CFBP 8728 / NCIMB 11950 / KT2440) protein is Methyl-accepting chemotaxis protein McpP.